Here is a 405-residue protein sequence, read N- to C-terminus: G1/S-specific cyclin-D (405 aa).

Positions 76-200 constitute a Cyclin N-terminal domain; sequence FYNCMEYEEA…LIVTTLQWET (125 aa). The disordered stretch occupies residues 301 to 405; sequence YTSEDAEKTE…STPPKIFKTL (105 aa). Residues 311–321 show a composition bias toward polar residues; that stretch reads PTPSAPASTQE. The segment covering 326–335 has biased composition (basic and acidic residues); that stretch reads QELKELKEEP. Polar residues predominate over residues 358 to 380; sequence SEQTPSTPLNDSGFSSDVSSPAS.

This sequence belongs to the cyclin family. Cyclin D subfamily. As to quaternary structure, interacts with cdk-4; the interaction is likely involved in regulating cdk-4 activity.

Its function is as follows. In association with cdk-4, regulates the progression through the G1 phase of the cell cycle during postembryonic development. Regulates proliferation of the coelomocyte lineage and intestinal cells during late embryogenesis. In complex with cdk-4, involved in sex determination during gonadogenesis by regulating the asymmetric division of the somatic gonadal precursor cell (SGP). This is G1/S-specific cyclin-D from Caenorhabditis elegans.